The chain runs to 492 residues: Malonyl-CoA decarboxylase, mitochondrial (492 aa).

Residues 1 to 28 (MRGLGPGLRARRLLPLRSPPRPPGPRGR) are disordered. A mitochondrion-targeting transit peptide spans 1–38 (MRGLGPGLRARRLLPLRSPPRPPGPRGRRLCGGLAASA). Residues 39-189 (MDELLRRAVP…VLKSMLSEWF (151 aa)) form an alpha-helical domain region. Lys58 bears the N6-acetyllysine mark. An N6-acetyllysine; alternate modification is found at Lys167. N6-succinyllysine; alternate is present on Lys167. Residues 190–492 (SSGFLNLERV…VAQFQNNSKL (303 aa)) form a catalytic domain region. Lys210 carries the post-translational modification N6-acetyllysine. At Lys221 the chain carries N6-succinyllysine. 298–304 (QGVELGT) contributes to the malonyl-CoA binding site. The residue at position 316 (Lys316) is an N6-acetyllysine. Position 328 (Ser328) interacts with malonyl-CoA. The active-site Proton acceptor is the Ser328. Lys385 bears the N6-acetyllysine; alternate mark. N6-succinyllysine; alternate is present on Lys385. The residue at position 388 (Lys388) is an N6-acetyllysine. Position 422 (His422) interacts with malonyl-CoA. His422 (proton donor) is an active-site residue. 2 positions are modified to N6-acetyllysine: Lys441 and Lys471. Positions 490 to 492 (SKL) match the Microbody targeting signal motif.

Homotetramer. Dimer of dimers. The two subunits within a dimer display conformational differences suggesting that at any given moment, only one of the two subunits is competent for malonyl-CoA binding and catalytic activity. Under oxidizing conditions, can form disulfide-linked homotetramers (in vitro). Associates with the peroxisomal targeting signal receptor PEX5. Post-translationally, interchain disulfide bonds may form in peroxisomes (Potential). Interchain disulfide bonds are not expected to form in the reducing environment of the cytoplasm and mitochondria. Acetylation at Lys-471 activates malonyl-CoA decarboxylase activity. Deacetylation at Lys-471 by SIRT4 represses activity, leading to promote lipogenesis.

It localises to the cytoplasm. Its subcellular location is the mitochondrion matrix. The protein resides in the peroxisome. The protein localises to the peroxisome matrix. The catalysed reaction is malonyl-CoA + H(+) = acetyl-CoA + CO2. Its pathway is metabolic intermediate biosynthesis; acetyl-CoA biosynthesis; acetyl-CoA from malonyl-CoA: step 1/1. With respect to regulation, malonyl-CoA decarboxylase activity does not require any cofactors or divalent metal ions. Functionally, catalyzes the conversion of malonyl-CoA to acetyl-CoA. In the fatty acid biosynthesis MCD selectively removes malonyl-CoA and thus assures that methyl-malonyl-CoA is the only chain elongating substrate for fatty acid synthase and that fatty acids with multiple methyl side chains are produced. In peroxisomes it may be involved in degrading intraperoxisomal malonyl-CoA, which is generated by the peroxisomal beta-oxidation of odd chain-length dicarboxylic fatty acids. Plays a role in the metabolic balance between glucose and lipid oxidation in muscle independent of alterations in insulin signaling. Plays a role in controlling the extent of ischemic injury by promoting glucose oxidation. This Mus musculus (Mouse) protein is Malonyl-CoA decarboxylase, mitochondrial.